The following is a 66-amino-acid chain: Light-harvesting protein B-800-850 alpha chain B (66 aa).

Over 1–11 (MNQGRIWTVVN) the chain is Cytoplasmic. Residues 12–35 (PGVGLPLLLGSVTVIAILVHYAVL) form a helical membrane-spanning segment. Residue His-31 coordinates a bacteriochlorophyll. At 36–66 (SNTTWFPKYWNGATVAAPAAAPAPAAPAAKK) the chain is on the periplasmic side.

Belongs to the antenna complex alpha subunit family. In terms of assembly, the core complex is formed by different alpha and beta chains, binding bacteriochlorophyll molecules, and arranged most probably in tetrameric structures disposed around the reaction center. The non-pigmented gamma chains may constitute additional components.

The protein localises to the cell inner membrane. Its function is as follows. Antenna complexes are light-harvesting systems, which transfer the excitation energy to the reaction centers. The sequence is that of Light-harvesting protein B-800-850 alpha chain B (pucAB) from Rhodopseudomonas palustris (strain ATCC BAA-98 / CGA009).